We begin with the raw amino-acid sequence, 709 residues long: Polyribonucleotide nucleotidyltransferase (709 aa).

Residues aspartate 486 and aspartate 492 each coordinate Mg(2+). One can recognise a KH domain in the interval 553–612 (PRIHTIKINPDKIKDVIGKGGSVIRALTEETGTTIEIEDDGTVKIAATDGEKAKHAISRI). One can recognise an S1 motif domain in the interval 622 to 690 (ARIYTGKVTR…RQGRVRLSIK (69 aa)).

The protein belongs to the polyribonucleotide nucleotidyltransferase family. As to quaternary structure, component of the RNA degradosome, which is a multiprotein complex involved in RNA processing and mRNA degradation. The cofactor is Mg(2+).

The protein localises to the cytoplasm. It carries out the reaction RNA(n+1) + phosphate = RNA(n) + a ribonucleoside 5'-diphosphate. In terms of biological role, involved in mRNA degradation. Catalyzes the phosphorolysis of single-stranded polyribonucleotides processively in the 3'- to 5'-direction. The protein is Polyribonucleotide nucleotidyltransferase of Photorhabdus laumondii subsp. laumondii (strain DSM 15139 / CIP 105565 / TT01) (Photorhabdus luminescens subsp. laumondii).